A 482-amino-acid chain; its full sequence is Probable cytosol aminopeptidase (482 aa).

Residues K251 and D256 each contribute to the Mn(2+) site. Residue K263 is part of the active site. D274, D333, and E335 together coordinate Mn(2+). The active site involves R337.

The protein belongs to the peptidase M17 family. Requires Mn(2+) as cofactor.

The protein localises to the cytoplasm. It catalyses the reaction Release of an N-terminal amino acid, Xaa-|-Yaa-, in which Xaa is preferably Leu, but may be other amino acids including Pro although not Arg or Lys, and Yaa may be Pro. Amino acid amides and methyl esters are also readily hydrolyzed, but rates on arylamides are exceedingly low.. The enzyme catalyses Release of an N-terminal amino acid, preferentially leucine, but not glutamic or aspartic acids.. Its function is as follows. Presumably involved in the processing and regular turnover of intracellular proteins. Catalyzes the removal of unsubstituted N-terminal amino acids from various peptides. In Acinetobacter baumannii (strain AB307-0294), this protein is Probable cytosol aminopeptidase.